The sequence spans 422 residues: Hispidin-3-hydroxylase (422 aa).

Residues 6-26 (NSLSVLIVGAGLGGLAAAIAL) form a helical membrane-spanning segment. The FAD site is built by Ala-50, Arg-108, and Asp-318.

It belongs to the paxM FAD-dependent monooxygenase family. Monomer. The cofactor is FAD.

It localises to the membrane. It catalyses the reaction hispidin + NADH + O2 + H(+) = 3-hydroxyhispidin + NAD(+) + H2O. The catalysed reaction is hispidin + NADPH + O2 + H(+) = 3-hydroxyhispidin + NADP(+) + H2O. It participates in secondary metabolite biosynthesis. Hispidin-3-hydroxylase; part of the gene cluster that mediates the fungal bioluminescence cycle. Hydroxylates hispidin in order to produce the fungal luciferin 3-hydroxyhispidin. The fungal bioluminescence cycle begins with the hispidin synthetase that catalyzes the formation of hispidin which is further hydroxylated by the hispidin-3-hydroxylase, yielding the fungal luciferin 3-hydroxyhispidin. The luciferase then produces an endoperoxide as a high-energy intermediate with decomposition that yields oxyluciferin (also known as caffeoylpyruvate) and light emission. Oxyluciferin can be recycled to caffeic acid by caffeoylpyruvate hydrolase. This Neonothopanus nambi (Agaricus nambi) protein is Hispidin-3-hydroxylase.